The following is a 249-amino-acid chain: Triosephosphate isomerase (249 aa).

9 to 11 (NWK) lines the substrate pocket. His95 acts as the Electrophile in catalysis. Glu166 serves as the catalytic Proton acceptor. Residues Gly172, Ser211, and 232–233 (GG) each bind substrate.

This sequence belongs to the triosephosphate isomerase family. In terms of assembly, homodimer.

It is found in the cytoplasm. The enzyme catalyses D-glyceraldehyde 3-phosphate = dihydroxyacetone phosphate. It functions in the pathway carbohydrate biosynthesis; gluconeogenesis. Its pathway is carbohydrate degradation; glycolysis; D-glyceraldehyde 3-phosphate from glycerone phosphate: step 1/1. In terms of biological role, involved in the gluconeogenesis. Catalyzes stereospecifically the conversion of dihydroxyacetone phosphate (DHAP) to D-glyceraldehyde-3-phosphate (G3P). This chain is Triosephosphate isomerase, found in Legionella pneumophila subsp. pneumophila (strain Philadelphia 1 / ATCC 33152 / DSM 7513).